Reading from the N-terminus, the 127-residue chain is Small ribosomal subunit protein bS6 (127 aa).

The disordered stretch occupies residues 99-127 (PLPAPRVVPGSEPAAAPQEQPAANSEAAS). Over residues 109 to 127 (SEPAAAPQEQPAANSEAAS) the composition is skewed to low complexity.

Belongs to the bacterial ribosomal protein bS6 family.

Functionally, binds together with bS18 to 16S ribosomal RNA. In Parasynechococcus marenigrum (strain WH8102), this protein is Small ribosomal subunit protein bS6.